Consider the following 177-residue polypeptide: MSIDLQQDFFALFGLPRRFRVDEAALEMAYHDLQGQVHPDRFAHLPDVEKRLSMQWATRVNEGFRTLRKPLPRAQYMLELAGVDAGLHTNTAMSSAFLMEQMEWREAVEEARAAGEGHELTQLHHRLRHHAREVFDELERTIDERHDFAAAAEIVRRLMFMEKIQHEIDDALEALET.

One can recognise a J domain in the interval 8-80 (DFFALFGLPR…LPRAQYMLEL (73 aa)).

Belongs to the HscB family. In terms of assembly, interacts with HscA and stimulates its ATPase activity.

In terms of biological role, co-chaperone involved in the maturation of iron-sulfur cluster-containing proteins. Seems to help targeting proteins to be folded toward HscA. The polypeptide is Co-chaperone protein HscB homolog (Aromatoleum aromaticum (strain DSM 19018 / LMG 30748 / EbN1) (Azoarcus sp. (strain EbN1))).